The following is a 258-amino-acid chain: UPF0246 protein Bpro_3713 (258 aa).

This sequence belongs to the UPF0246 family.

The chain is UPF0246 protein Bpro_3713 from Polaromonas sp. (strain JS666 / ATCC BAA-500).